Here is a 431-residue protein sequence, read N- to C-terminus: Adenylosuccinate synthetase (431 aa).

Residues 13 to 19 (GDEGKGK) and 41 to 43 (GHT) contribute to the GTP site. Asp14 serves as the catalytic Proton acceptor. Asp14 and Gly41 together coordinate Mg(2+). Residues 14–17 (DEGK), 39–42 (NAGH), Thr130, Arg144, Gln225, Thr240, and Arg304 each bind IMP. Catalysis depends on His42, which acts as the Proton donor. Residue 300 to 306 (ATTGRQR) participates in substrate binding. GTP is bound by residues Arg306, 332 to 334 (KLD), and 414 to 416 (STG).

It belongs to the adenylosuccinate synthetase family. In terms of assembly, homodimer. Mg(2+) serves as cofactor.

The protein resides in the cytoplasm. The enzyme catalyses IMP + L-aspartate + GTP = N(6)-(1,2-dicarboxyethyl)-AMP + GDP + phosphate + 2 H(+). It functions in the pathway purine metabolism; AMP biosynthesis via de novo pathway; AMP from IMP: step 1/2. Functionally, plays an important role in the de novo pathway of purine nucleotide biosynthesis. Catalyzes the first committed step in the biosynthesis of AMP from IMP. The protein is Adenylosuccinate synthetase of Saccharophagus degradans (strain 2-40 / ATCC 43961 / DSM 17024).